The following is a 289-amino-acid chain: Glucose and ribitol dehydrogenase homolog 2 (289 aa).

The interval 1 to 32 is disordered; it reads MASGFPPQKQETQPGIQHVMEPTPEFSSSNYK. 43-67 lines the NAD(+) pocket; it reads LVTGGDSGIGKAVCHCYALEGASVA. Ser-180 is a substrate binding site. Tyr-193 acts as the Proton acceptor in catalysis.

It belongs to the short-chain dehydrogenases/reductases (SDR) family.

Its function is as follows. May act as a short alcohol-polyol-sugar dehydrogenase possibly related to carbohydrate metabolism and the acquisition of desiccation tolerance. May also be involved in signal transduction. This is Glucose and ribitol dehydrogenase homolog 2 from Arabidopsis thaliana (Mouse-ear cress).